The sequence spans 564 residues: Juvenile hormone esterase (564 aa).

The N-terminal stretch at 1–19 is a signal peptide; it reads MTSHVLALAFLLHACTALA. Asn81 carries an N-linked (GlcNAc...) asparagine glycan. Cys89 and Cys109 are joined by a disulfide. Asn180 carries an N-linked (GlcNAc...) asparagine glycan. Ser220 functions as the Acyl-ester intermediate in the catalytic mechanism. Glu351 acts as the Charge relay system in catalysis. Asn402 carries N-linked (GlcNAc...) asparagine glycosylation. His465 serves as the catalytic Charge relay system. An N-linked (GlcNAc...) asparagine glycan is attached at Asn515.

Belongs to the type-B carboxylesterase/lipase family.

The enzyme catalyses juvenile hormone I + H2O = juvenile hormone I carboxylate + methanol + H(+). It catalyses the reaction juvenile hormone III + H2O = juvenile hormone III carboxylate + methanol + H(+). Functionally, JH esterase plays a crucial role in the decrease of JH activity in lepidopteran insects, by hydrolyzing the methyl ester of JH. It is also involved in the transport of JH. The sequence is that of Juvenile hormone esterase from Heliothis virescens (Tobacco budworm moth).